The chain runs to 72 residues: UPF0495 protein KLLA0D04334g (72 aa).

The helical transmembrane segment at 20 to 42 threads the bilayer; that stretch reads PVELTPLFLAMGVALASGTWFSY.

Belongs to the UPF0495 family.

It is found in the membrane. The polypeptide is UPF0495 protein KLLA0D04334g (Kluyveromyces lactis (strain ATCC 8585 / CBS 2359 / DSM 70799 / NBRC 1267 / NRRL Y-1140 / WM37) (Yeast)).